The chain runs to 168 residues: Plastocyanin B, chloroplastic (168 aa).

The transit peptide at 1–69 (MAAVTSAAVS…SAMIASNAMA (69 aa)) directs the protein to the chloroplast. In terms of domain architecture, Plastocyanin-like spans 70-168 (VDVLLGADDG…AGMVGKVIVN (99 aa)). Cu cation-binding residues include His106, Cys153, His156, and Met161.

It belongs to the plastocyanin family. Cu(2+) is required as a cofactor.

The protein resides in the plastid. It is found in the chloroplast thylakoid membrane. Functionally, participates in electron transfer between P700 and the cytochrome b6-f complex in photosystem I. The sequence is that of Plastocyanin B, chloroplastic (PETE) from Populus nigra (Lombardy poplar).